The chain runs to 332 residues: Ephrin-B2a (332 aa).

A signal peptide spans 1-24 (MGDSLWRYYFGVLVIACKVNLSRA). N-linked (GlcNAc...) asparagine glycosylation is found at Asn20 and Asn33. Residues 25–161 (LILDSIYWNT…TKSMKIIMKV (137 aa)) form the Ephrin RBD domain. Residues 25-225 (LILDSIYWNT…VIGSEVALFA (201 aa)) are Extracellular-facing. Cystine bridges form between Cys59/Cys98 and Cys86/Cys150. A glycan (N-linked (GlcNAc...) asparagine) is linked at Asn136. The interval 162–212 (GQNPSDPISPKDYPTSYPPKHPDLGGKDSKSNEVLKPDASPHGEDKGDGNK) is disordered. Basic and acidic residues predominate over residues 181 to 210 (KHPDLGGKDSKSNEVLKPDASPHGEDKGDG). The N-linked (GlcNAc...) asparagine glycan is linked to Asn211. A helical membrane pass occupies residues 226-246 (CIASASVIVIIIIIMLVFLLL). Over 247–332 (KYRRRHRKHS…QSPANIYYKV (86 aa)) the chain is Cytoplasmic. The disordered stretch occupies residues 255–285 (HSPQHATTLSLSTLATPKRGGSGGNNNGSEP). The span at 260 to 270 (ATTLSLSTLAT) shows a compositional bias: low complexity. A PDZ-binding motif is present at residues 330–332 (YKV).

It belongs to the ephrin family. In terms of assembly, binds to the receptor tyrosine kinase ephb4. Post-translationally, inducible phosphorylation of tyrosine residues in the cytoplasmic domain.

Its subcellular location is the cell membrane. Its function is as follows. Cell surface transmembrane ligand for Eph receptors, a family of receptor tyrosine kinases which are crucial for migration, repulsion and adhesion during neuronal, vascular and epithelial development. Binds promiscuously Eph receptors residing on adjacent cells, leading to contact-dependent bidirectional signaling into neighboring cells. The signaling pathway downstream of the receptor is referred to as forward signaling while the signaling pathway downstream of the ephrin ligand is referred to as reverse signaling. Together with ephb4 may play a central role in heart morphogenesis and angiogenesis through regulation of cell adhesion and cell migration. The protein is Ephrin-B2a (efnb2a) of Danio rerio (Zebrafish).